A 366-amino-acid chain; its full sequence is Chorismate synthase (366 aa).

NADP(+)-binding residues include Arg48 and Arg54. FMN-binding positions include 125–127, 241–242, Gly285, 300–304, and Arg326; these read RSS, NA, and KPTSS.

This sequence belongs to the chorismate synthase family. In terms of assembly, homotetramer. The cofactor is FMNH2.

The catalysed reaction is 5-O-(1-carboxyvinyl)-3-phosphoshikimate = chorismate + phosphate. Its pathway is metabolic intermediate biosynthesis; chorismate biosynthesis; chorismate from D-erythrose 4-phosphate and phosphoenolpyruvate: step 7/7. In terms of biological role, catalyzes the anti-1,4-elimination of the C-3 phosphate and the C-6 proR hydrogen from 5-enolpyruvylshikimate-3-phosphate (EPSP) to yield chorismate, which is the branch point compound that serves as the starting substrate for the three terminal pathways of aromatic amino acid biosynthesis. This reaction introduces a second double bond into the aromatic ring system. The polypeptide is Chorismate synthase (Cereibacter sphaeroides (strain ATCC 17023 / DSM 158 / JCM 6121 / CCUG 31486 / LMG 2827 / NBRC 12203 / NCIMB 8253 / ATH 2.4.1.) (Rhodobacter sphaeroides)).